A 359-amino-acid polypeptide reads, in one-letter code: Molybdenum import ATP-binding protein ModC (359 aa).

The ABC transporter domain occupies 1–233 (MSGLTVSIRG…IDAESEGGGV (233 aa)). Residue 32–39 (GHSGAGKT) coordinates ATP. The 67-residue stretch at 289–355 (AISIRNLLPV…VKAVSVDRAA (67 aa)) folds into the Mop domain.

It belongs to the ABC transporter superfamily. Molybdate importer (TC 3.A.1.8) family. As to quaternary structure, the complex is composed of two ATP-binding proteins (ModC), two transmembrane proteins (ModB) and a solute-binding protein (ModA).

The protein localises to the cell inner membrane. It catalyses the reaction molybdate(out) + ATP + H2O = molybdate(in) + ADP + phosphate + H(+). Functionally, part of the ABC transporter complex ModABC involved in molybdenum import. Responsible for energy coupling to the transport system. This Brucella suis biovar 1 (strain 1330) protein is Molybdenum import ATP-binding protein ModC.